Consider the following 145-residue polypeptide: Major pollen allergen Lig v 1 (145 aa).

3 disulfide bridges follow: C19/C90, C22/C131, and C43/C78. Residue N111 is glycosylated (N-linked (GlcNAc...) asparagine).

Belongs to the Ole e I family.

It is found in the secreted. This Ligustrum vulgare (Common privet) protein is Major pollen allergen Lig v 1.